The chain runs to 369 residues: Glutamate 5-kinase (369 aa).

Lysine 14 serves as a coordination point for ATP. Substrate contacts are provided by serine 56, aspartate 143, and asparagine 155. Residues 175–176 (SD) and 215–221 (TGGMASK) contribute to the ATP site. The PUA domain occupies 277–351 (AGKIRLDQGA…GMKTQELPDD (75 aa)).

It belongs to the glutamate 5-kinase family.

The protein localises to the cytoplasm. The catalysed reaction is L-glutamate + ATP = L-glutamyl 5-phosphate + ADP. It functions in the pathway amino-acid biosynthesis; L-proline biosynthesis; L-glutamate 5-semialdehyde from L-glutamate: step 1/2. Catalyzes the transfer of a phosphate group to glutamate to form L-glutamate 5-phosphate. The polypeptide is Glutamate 5-kinase (Corynebacterium efficiens (strain DSM 44549 / YS-314 / AJ 12310 / JCM 11189 / NBRC 100395)).